The primary structure comprises 147 residues: Large ribosomal subunit protein uL22c (147 aa).

It belongs to the universal ribosomal protein uL22 family. In terms of assembly, part of the 50S ribosomal subunit.

Its subcellular location is the plastid. It is found in the chloroplast. In terms of biological role, this protein binds specifically to 23S rRNA. Functionally, the globular domain of the protein is located near the polypeptide exit tunnel on the outside of the subunit, while an extended beta-hairpin is found that lines the wall of the exit tunnel in the center of the 70S ribosome. This chain is Large ribosomal subunit protein uL22c (rpl22), found in Lolium perenne (Perennial ryegrass).